The sequence spans 397 residues: uncharacterized protein (397 aa).

The next 12 helical transmembrane spans lie at Leu-5 to Leu-25, Leu-43 to Phe-63, Phe-69 to Phe-89, Trp-92 to Ala-112, Ala-131 to Ala-151, Tyr-157 to Phe-177, Phe-202 to Trp-222, Ile-233 to Leu-253, Leu-269 to Thr-289, Phe-293 to Ala-313, Phe-333 to Val-353, and Ala-360 to Asp-380.

This sequence belongs to the major facilitator superfamily.

It is found in the cell membrane. This is an uncharacterized protein from Bacillus subtilis (strain 168).